Reading from the N-terminus, the 473-residue chain is Siroheme synthase 2 (473 aa).

A precorrin-2 dehydrogenase /sirohydrochlorin ferrochelatase region spans residues 1–204 (MDYFPIFCQL…NDHVQADQHV (204 aa)). NAD(+) contacts are provided by residues 22 to 23 (EI) and 43 to 44 (CE). S128 is modified (phosphoserine). Positions 216–473 (GEVVLVGAGP…KVTECVAHVG (258 aa)) are uroporphyrinogen-III C-methyltransferase. P225 contributes to the S-adenosyl-L-methionine binding site. Catalysis depends on D248, which acts as the Proton acceptor. The active-site Proton donor is K270. Residues 301-303 (GGD), I306, 331-332 (TA), M382, and G411 each bind S-adenosyl-L-methionine.

In the N-terminal section; belongs to the precorrin-2 dehydrogenase / sirohydrochlorin ferrochelatase family. It in the C-terminal section; belongs to the precorrin methyltransferase family.

The catalysed reaction is uroporphyrinogen III + 2 S-adenosyl-L-methionine = precorrin-2 + 2 S-adenosyl-L-homocysteine + H(+). It carries out the reaction precorrin-2 + NAD(+) = sirohydrochlorin + NADH + 2 H(+). The enzyme catalyses siroheme + 2 H(+) = sirohydrochlorin + Fe(2+). It participates in cofactor biosynthesis; adenosylcobalamin biosynthesis; precorrin-2 from uroporphyrinogen III: step 1/1. It functions in the pathway cofactor biosynthesis; adenosylcobalamin biosynthesis; sirohydrochlorin from precorrin-2: step 1/1. The protein operates within porphyrin-containing compound metabolism; siroheme biosynthesis; precorrin-2 from uroporphyrinogen III: step 1/1. Its pathway is porphyrin-containing compound metabolism; siroheme biosynthesis; siroheme from sirohydrochlorin: step 1/1. It participates in porphyrin-containing compound metabolism; siroheme biosynthesis; sirohydrochlorin from precorrin-2: step 1/1. Multifunctional enzyme that catalyzes the SAM-dependent methylations of uroporphyrinogen III at position C-2 and C-7 to form precorrin-2 via precorrin-1. Then it catalyzes the NAD-dependent ring dehydrogenation of precorrin-2 to yield sirohydrochlorin. Finally, it catalyzes the ferrochelation of sirohydrochlorin to yield siroheme. The polypeptide is Siroheme synthase 2 (Yersinia pseudotuberculosis serotype O:1b (strain IP 31758)).